The chain runs to 217 residues: Serine acetyltransferase (217 aa).

It belongs to the transferase hexapeptide repeat family.

It localises to the cytoplasm. It catalyses the reaction L-serine + acetyl-CoA = O-acetyl-L-serine + CoA. The protein operates within amino-acid biosynthesis; L-cysteine biosynthesis; L-cysteine from L-serine: step 1/2. Its activity is regulated as follows. Inhibited by cysteine. Catalyzes the acetylation of serine by acetyl-CoA to produce O-acetylserine (OAS). In Bacillus subtilis (strain 168), this protein is Serine acetyltransferase (cysE).